The primary structure comprises 602 residues: Leucine-rich repeat-containing protein 40 (602 aa).

Ser71 carries the phosphoserine modification. 20 LRR repeats span residues 83–104 (DLTK…LRLL), 106–127 (ALTV…IREL), 129–150 (NLQK…ITNL), 152–173 (NLKC…FEQL), 175–196 (NLED…FSSL), 198–219 (SLVR…INRM), 221–242 (RLKH…LAGM), 244–265 (SLEL…PSCS), 266–286 (LLKE…EHLK), 290–311 (SILV…IILL), 313–335 (SLER…GNLH), 336–356 (LKFL…IISK), 400–421 (TLKI…VFDA), 426–447 (IVTS…MVEL), 450–472 (MVSD…CVLQ), 473–494 (KLTF…MESL), 496–517 (RLQT…LYRI), 519–540 (TLET…KMKM), 543–564 (NLTT…LGNC), and 566–586 (NLRT…AILM).

The chain is Leucine-rich repeat-containing protein 40 (LRRC40) from Homo sapiens (Human).